The chain runs to 354 residues: Holliday junction branch migration complex subunit RuvB (354 aa).

The interval 4-198 is large ATPase domain (RuvB-L); it reads TTDYGASNTG…FGFTAHLDFY (195 aa). Residues L37, R38, G79, K82, T83, T84, 145–147, R188, Y198, and R235 each bind ATP; that span reads EDF. Residue T83 participates in Mg(2+) binding. The interval 199-269 is small ATPAse domain (RuvB-S); it reads PHEELEKLIE…DVKEALALYQ (71 aa). Residues 272-354 form a head domain (RuvB-H) region; that stretch reads SEGLDRLDIA…TPKDDVSKLF (83 aa). Residues R327 and R332 each coordinate DNA.

It belongs to the RuvB family. Homohexamer. Forms an RuvA(8)-RuvB(12)-Holliday junction (HJ) complex. HJ DNA is sandwiched between 2 RuvA tetramers; dsDNA enters through RuvA and exits via RuvB. An RuvB hexamer assembles on each DNA strand where it exits the tetramer. Each RuvB hexamer is contacted by two RuvA subunits (via domain III) on 2 adjacent RuvB subunits; this complex drives branch migration. In the full resolvosome a probable DNA-RuvA(4)-RuvB(12)-RuvC(2) complex forms which resolves the HJ.

It is found in the cytoplasm. It carries out the reaction ATP + H2O = ADP + phosphate + H(+). In terms of biological role, the RuvA-RuvB-RuvC complex processes Holliday junction (HJ) DNA during genetic recombination and DNA repair, while the RuvA-RuvB complex plays an important role in the rescue of blocked DNA replication forks via replication fork reversal (RFR). RuvA specifically binds to HJ cruciform DNA, conferring on it an open structure. The RuvB hexamer acts as an ATP-dependent pump, pulling dsDNA into and through the RuvAB complex. RuvB forms 2 homohexamers on either side of HJ DNA bound by 1 or 2 RuvA tetramers; 4 subunits per hexamer contact DNA at a time. Coordinated motions by a converter formed by DNA-disengaged RuvB subunits stimulates ATP hydrolysis and nucleotide exchange. Immobilization of the converter enables RuvB to convert the ATP-contained energy into a lever motion, pulling 2 nucleotides of DNA out of the RuvA tetramer per ATP hydrolyzed, thus driving DNA branch migration. The RuvB motors rotate together with the DNA substrate, which together with the progressing nucleotide cycle form the mechanistic basis for DNA recombination by continuous HJ branch migration. Branch migration allows RuvC to scan DNA until it finds its consensus sequence, where it cleaves and resolves cruciform DNA. This chain is Holliday junction branch migration complex subunit RuvB, found in Bifidobacterium longum (strain NCC 2705).